We begin with the raw amino-acid sequence, 240 residues long: Fatty acid metabolism regulator protein (240 aa).

The region spanning 6–74 (KGPASFAEKY…HGKPTRVNNF (69 aa)) is the HTH gntR-type domain. A DNA-binding region (H-T-H motif) is located at residues 34–53 (ERELSELIGVTRTTLREVLQ).

In terms of assembly, homodimer.

It is found in the cytoplasm. Multifunctional regulator of fatty acid metabolism. This is Fatty acid metabolism regulator protein from Shewanella oneidensis (strain ATCC 700550 / JCM 31522 / CIP 106686 / LMG 19005 / NCIMB 14063 / MR-1).